Consider the following 122-residue polypeptide: Large ribosomal subunit protein bL12 (122 aa).

This sequence belongs to the bacterial ribosomal protein bL12 family. Homodimer. Part of the ribosomal stalk of the 50S ribosomal subunit. Forms a multimeric L10(L12)X complex, where L10 forms an elongated spine to which 2 to 4 L12 dimers bind in a sequential fashion. Binds GTP-bound translation factors.

Its function is as follows. Forms part of the ribosomal stalk which helps the ribosome interact with GTP-bound translation factors. Is thus essential for accurate translation. This Vibrio campbellii (strain ATCC BAA-1116) protein is Large ribosomal subunit protein bL12.